The sequence spans 463 residues: Chromosomal replication initiator protein DnaA (463 aa).

The interval 1–83 is domain I, interacts with DnaA modulators; the sequence is MSTNQIILTD…LQLFQHYNNT (83 aa). The interval 83 to 124 is domain II; that stretch reads TIKSIEIITKELPGITQTVIALPTKTFADIGSSELNAENIFS. A domain III, AAA+ region region spans residues 125-343; sequence TLDVRFTFDN…GALNKVIAHS (219 aa). The ATP site is built by Gly-171, Gly-173, Lys-174, and Thr-175. A domain IV, binds dsDNA region spans residues 344–463; sequence NFTLKEITLE…INLLMKILQN (120 aa).

It belongs to the DnaA family. Oligomerizes as a right-handed, spiral filament on DNA at oriC.

The protein resides in the cytoplasm. Plays an essential role in the initiation and regulation of chromosomal replication. ATP-DnaA binds to the origin of replication (oriC) to initiate formation of the DNA replication initiation complex once per cell cycle. Binds the DnaA box (a 9 base pair repeat at the origin) and separates the double-stranded (ds)DNA. Forms a right-handed helical filament on oriC DNA; dsDNA binds to the exterior of the filament while single-stranded (ss)DNA is stabiized in the filament's interior. The ATP-DnaA-oriC complex binds and stabilizes one strand of the AT-rich DNA unwinding element (DUE), permitting loading of DNA polymerase. After initiation quickly degrades to an ADP-DnaA complex that is not apt for DNA replication. Binds acidic phospholipids. This chain is Chromosomal replication initiator protein DnaA, found in Rickettsia massiliae (strain Mtu5).